Reading from the N-terminus, the 298-residue chain is Ribosomal RNA small subunit methyltransferase A (298 aa).

S-adenosyl-L-methionine-binding residues include N30, V32, G57, E78, D108, and N126.

Belongs to the class I-like SAM-binding methyltransferase superfamily. rRNA adenine N(6)-methyltransferase family. RsmA subfamily.

The protein resides in the cytoplasm. It catalyses the reaction adenosine(1518)/adenosine(1519) in 16S rRNA + 4 S-adenosyl-L-methionine = N(6)-dimethyladenosine(1518)/N(6)-dimethyladenosine(1519) in 16S rRNA + 4 S-adenosyl-L-homocysteine + 4 H(+). Functionally, specifically dimethylates two adjacent adenosines (A1518 and A1519) in the loop of a conserved hairpin near the 3'-end of 16S rRNA in the 30S particle. May play a critical role in biogenesis of 30S subunits. This Cutibacterium acnes (strain DSM 16379 / KPA171202) (Propionibacterium acnes) protein is Ribosomal RNA small subunit methyltransferase A.